Here is a 487-residue protein sequence, read N- to C-terminus: Capsid protein (487 aa).

The segment at 1 to 66 is disordered; it reads MNQDTPLANL…VPPAGPSRSA (66 aa). Residues 30–41 show a composition bias toward low complexity; that stretch reads NVAPPAQGAVQQ.

The protein localises to the virion. Functionally, the capsid protein self-assembles to form an icosahedral capsid with a T=2 symmetry made of 120 subunits. The polypeptide is Capsid protein (Trifolium repens (Creeping white clover)).